The primary structure comprises 265 residues: Chlorophyll a-b binding protein 1C, chloroplastic (265 aa).

The transit peptide at 1–34 (MAAATMALSSPSFAGQAVKLSPSASEISGNGRIT) directs the protein to the chloroplast. Residues 151–171 (LVHAQSILAIWACQVVLMGAV) form a helical membrane-spanning segment. The chlorophyll b site is built by valine 152, serine 156, glutamine 164, glutamate 172, arginine 175, and leucine 181. The chlorophyll a site is built by lysine 212, glutamate 213, asparagine 216, arginine 218, glutamine 230, histidine 245, and alanine 254. The chain crosses the membrane as a helical span at residues 219 to 239 (LAMFSMFGFFVQAIVTGKGPL). Chlorophyll b is bound at residue phenylalanine 261.

Belongs to the light-harvesting chlorophyll a/b-binding (LHC) protein family. As to quaternary structure, the LHC complex consists of chlorophyll a-b binding proteins. The cofactor is Binds at least 14 chlorophylls (8 Chl-a and 6 Chl-b) and carotenoids such as lutein and neoxanthin.. Post-translationally, photoregulated by reversible phosphorylation of its threonine residues.

The protein resides in the plastid. It localises to the chloroplast thylakoid membrane. In terms of biological role, the light-harvesting complex (LHC) functions as a light receptor, it captures and delivers excitation energy to photosystems with which it is closely associated. The protein is Chlorophyll a-b binding protein 1C, chloroplastic (CAB1C) of Solanum lycopersicum (Tomato).